A 469-amino-acid polypeptide reads, in one-letter code: ATP-dependent protease ATPase subunit HslU (469 aa).

Residues Ile-24, 66 to 71, Asp-282, Glu-347, and Arg-419 contribute to the ATP site; that span reads GVGKTE.

The protein belongs to the ClpX chaperone family. HslU subfamily. As to quaternary structure, a double ring-shaped homohexamer of HslV is capped on each side by a ring-shaped HslU homohexamer. The assembly of the HslU/HslV complex is dependent on binding of ATP.

It localises to the cytoplasm. Its function is as follows. ATPase subunit of a proteasome-like degradation complex; this subunit has chaperone activity. The binding of ATP and its subsequent hydrolysis by HslU are essential for unfolding of protein substrates subsequently hydrolyzed by HslV. HslU recognizes the N-terminal part of its protein substrates and unfolds these before they are guided to HslV for hydrolysis. This chain is ATP-dependent protease ATPase subunit HslU, found in Listeria monocytogenes serotype 4b (strain CLIP80459).